Here is a 532-residue protein sequence, read N- to C-terminus: MRLFRQLSIQWKITILSFGIVAFALMMVSISLLGYVTSIKEDELSNRTMITAQLVAQNHTVQQWVDAKPEEASRTLQPIVERIRVINDHDYIVLLNMDRIRITHPIPERLQTPFVGGDEDPAFAEHIYLSKAKTEGVVTVRAFMPILNQQREQVGVAVVGSVLPSYADMIQEFWQPALLIGLITALFGFWGSWLLASHIKRQTFNMEPDELAHLLVERDASFNAIHEGVVAINKHEKITIMNEAARRMLGVKEKAIGRNIHEVIPDTKLPEILSIGKPLYQREFYIQGRLVFSNRIPIQIDGETVGAIAIFQDKSDVDRLAEELTGVQAFVDALRVQNHEYSNKLHTIAGLIQLDEGKKALQYIFDLEEEQEEFSGVVMQKIHNDSLAGLLLGKVSRGKELGVQVIIEKDSEFIDHPEGVTTHDLVVIVGNLIDNSLDAFSSTQDQNKTVHVFIGEENDFLKIRVRDNGEGIREEVREKMFVRGFSTKSTSGRGIGLFLIQAIVERVEGKIEVESELNIGTTFSIYLPKKRG.

Residues 1-12 lie on the Cytoplasmic side of the membrane; that stretch reads MRLFRQLSIQWK. Residues 13 to 33 form a helical membrane-spanning segment; that stretch reads ITILSFGIVAFALMMVSISLL. Over 34–175 the chain is Extracellular; the sequence is GYVTSIKEDE…YADMIQEFWQ (142 aa). Residues 176–196 form a helical membrane-spanning segment; sequence PALLIGLITALFGFWGSWLLA. Over 197-532 the chain is Cytoplasmic; it reads SHIKRQTFNM…FSIYLPKKRG (336 aa). The PAS domain occupies 216-279; it reads VERDASFNAI…PEILSIGKPL (64 aa). The 217-residue stretch at 315–531 folds into the Histidine kinase domain; the sequence is SDVDRLAEEL…TFSIYLPKKR (217 aa). H339 is modified (phosphohistidine; by autocatalysis).

The protein resides in the cell membrane. It carries out the reaction ATP + protein L-histidine = ADP + protein N-phospho-L-histidine.. Functionally, member of the two-component regulatory system DctS/DctR. Probably activates DctR by phosphorylation. Essential for expression of dctP. The chain is Probable C4-dicarboxylate sensor kinase (dctS) from Halalkalibacterium halodurans (strain ATCC BAA-125 / DSM 18197 / FERM 7344 / JCM 9153 / C-125) (Bacillus halodurans).